The sequence spans 213 residues: Pyridoxine/pyridoxamine 5'-phosphate oxidase (213 aa).

Residues 9-12 (RKSY) and Lys-67 each bind substrate. FMN-binding positions include 62-67 (RVVLIK), 77-78 (YT), Arg-83, and Lys-84. Positions 124, 128, and 132 each coordinate substrate. Residues 141 to 142 (QS) and Trp-185 contribute to the FMN site. A substrate-binding site is contributed by 191–193 (RLH). Arg-195 contacts FMN.

This sequence belongs to the pyridoxamine 5'-phosphate oxidase family. As to quaternary structure, homodimer. The cofactor is FMN.

It carries out the reaction pyridoxamine 5'-phosphate + O2 + H2O = pyridoxal 5'-phosphate + H2O2 + NH4(+). It catalyses the reaction pyridoxine 5'-phosphate + O2 = pyridoxal 5'-phosphate + H2O2. It functions in the pathway cofactor metabolism; pyridoxal 5'-phosphate salvage; pyridoxal 5'-phosphate from pyridoxamine 5'-phosphate: step 1/1. It participates in cofactor metabolism; pyridoxal 5'-phosphate salvage; pyridoxal 5'-phosphate from pyridoxine 5'-phosphate: step 1/1. Functionally, catalyzes the oxidation of either pyridoxine 5'-phosphate (PNP) or pyridoxamine 5'-phosphate (PMP) into pyridoxal 5'-phosphate (PLP). The sequence is that of Pyridoxine/pyridoxamine 5'-phosphate oxidase from Methylibium petroleiphilum (strain ATCC BAA-1232 / LMG 22953 / PM1).